The following is a 292-amino-acid chain: 33 kDa chaperonin (292 aa).

Disulfide bonds link C229–C231 and C262–C265.

This sequence belongs to the HSP33 family. Under oxidizing conditions two disulfide bonds are formed involving the reactive cysteines. Under reducing conditions zinc is bound to the reactive cysteines and the protein is inactive.

Its subcellular location is the cytoplasm. Redox regulated molecular chaperone. Protects both thermally unfolding and oxidatively damaged proteins from irreversible aggregation. Plays an important role in the bacterial defense system toward oxidative stress. This chain is 33 kDa chaperonin, found in Photobacterium profundum (strain SS9).